A 368-amino-acid polypeptide reads, in one-letter code: DNA replication and repair protein RecF (368 aa).

Position 30-37 (30-37 (GNNAQGKT)) interacts with ATP.

The protein belongs to the RecF family.

Its subcellular location is the cytoplasm. Its function is as follows. The RecF protein is involved in DNA metabolism; it is required for DNA replication and normal SOS inducibility. RecF binds preferentially to single-stranded, linear DNA. It also seems to bind ATP. In Streptococcus pyogenes serotype M5 (strain Manfredo), this protein is DNA replication and repair protein RecF.